Reading from the N-terminus, the 315-residue chain is ADP/ATP translocase 4 (315 aa).

Residues 1–19 (MHREPAKKKAEKRLFDASS) are Mitochondrial intermembrane-facing. Residues 18–110 (SSFGKDLLAG…FAFKDKYKQL (93 aa)) form a Solcar 1 repeat. Residues 20–49 (FGKDLLAGGVAAAVSKTAVAPIERVKLLLQ) traverse the membrane as a helical segment. Topologically, residues 50-86 (VQASSKQISPEARYKGMVDCLVRIPREQGFFSFWRGN) are mitochondrial matrix. The chain crosses the membrane as a helical span at residues 87–111 (LANVIRYFPTQALNFAFKDKYKQLF). 2 residues coordinate ADP: arginine 92 and lysine 104. The Mitochondrial intermembrane segment spans residues 112-121 (MSGVNKEKQF). Residues 122–142 (WRWFLANLASGGAAGATSLCV) traverse the membrane as a helical segment. 2 Solcar repeats span residues 123-213 (RWFL…VKGL) and 220-307 (TPFL…IKEF). At 143 to 190 (VYPLDFARTRLGVDIGKGPEERQFKGLGDCIMKIAKSDGIAGLYQGFG) the chain is on the mitochondrial matrix side. The helical transmembrane segment at 191 to 211 (VSVQGIIVYRASYFGAYDTVK) threads the bilayer. The Mitochondrial intermembrane segment spans residues 212–222 (GLLPKPKKTPF). Residues 223–243 (LVSFFIAQVVTTCSGILSYPF) traverse the membrane as a helical segment. Residues 244–283 (DTVRRRMMMQSGEAKRQYKGTLDCFVKIYQHEGISSFFRG) are Mitochondrial matrix-facing. Residue arginine 247 coordinates ADP. The tract at residues 247-252 (RRRMMM) is important for transport activity. A Nucleotide carrier signature motif motif is present at residues 247–252 (RRRMMM). Residues 284 to 301 (AFSNVLRGTGGALVLVLY) form a helical membrane-spanning segment. Topologically, residues 302 to 315 (DKIKEFFHIDIGGR) are mitochondrial intermembrane.

It belongs to the mitochondrial carrier (TC 2.A.29) family. In terms of assembly, monomer. Expressed in brain, liver, sperm and testis. In testis, expressed at higher level in spermatocytes, while it is expressed at lower level in spermatogonial cells. Expressed in erythrocytes (at protein level).

It localises to the mitochondrion inner membrane. Its subcellular location is the membrane. The protein localises to the cell projection. The protein resides in the cilium. It is found in the flagellum membrane. The catalysed reaction is ADP(in) + ATP(out) = ADP(out) + ATP(in). The enzyme catalyses dATP(out) + ADP(in) = dATP(in) + ADP(out). It carries out the reaction dADP(in) + ADP(out) = dADP(out) + ADP(in). It catalyses the reaction H(+)(in) = H(+)(out). The matrix-open state (m-state) is inhibited by the membrane-permeable bongkrekic acid (BKA). The cytoplasmic-open state (c-state) is inhibited by the membrane-impermeable toxic inhibitor carboxyatractyloside (CATR). Proton transporter activity is inhibited by ADP:ATP antiporter activity. ADP:ATP antiporter that mediates import of ADP into the mitochondrial matrix for ATP synthesis, and export of ATP out to fuel the cell. Cycles between the cytoplasmic-open state (c-state) and the matrix-open state (m-state): operates by the alternating access mechanism with a single substrate-binding site intermittently exposed to either the cytosolic (c-state) or matrix (m-state) side of the inner mitochondrial membrane. Specifically required during spermatogenesis, probably to mediate ADP:ATP exchange in spermatocytes. Large ATP supplies from mitochondria may be critical for normal progression of spermatogenesis during early stages of meiotic prophase I, including DNA double-strand break repair and chromosomal synapsis. In addition to its ADP:ATP antiporter activity, also involved in mitochondrial uncoupling and mitochondrial permeability transition pore (mPTP) activity. Plays a role in mitochondrial uncoupling by acting as a proton transporter: proton transport uncouples the proton flows via the electron transport chain and ATP synthase to reduce the efficiency of ATP production and cause mitochondrial thermogenesis. Proton transporter activity is inhibited by ADP:ATP antiporter activity, suggesting that SLC25A31/ANT4 acts as a master regulator of mitochondrial energy output by maintaining a delicate balance between ATP production (ADP:ATP antiporter activity) and thermogenesis (proton transporter activity). Proton transporter activity requires free fatty acids as cofactor, but does not transport it. Among nucleotides, may also exchange ADP for dATP and dADP. Also plays a key role in mPTP opening, a non-specific pore that enables free passage of the mitochondrial membranes to solutes of up to 1.5 kDa, and which contributes to cell death. It is however unclear if SLC25A31/ANT4 constitutes a pore-forming component of mPTP or regulates it. This chain is ADP/ATP translocase 4, found in Homo sapiens (Human).